Reading from the N-terminus, the 131-residue chain is UPF0102 protein YraN (131 aa).

Positions 1-19 are enriched in polar residues; the sequence is MATVPTRSGSPRQLTTKQT. The interval 1 to 21 is disordered; it reads MATVPTRSGSPRQLTTKQTGD.

The protein belongs to the UPF0102 family.

This is UPF0102 protein YraN from Escherichia coli O45:K1 (strain S88 / ExPEC).